Reading from the N-terminus, the 468-residue chain is Glutamate--tRNA ligase (468 aa).

The 'HIGH' region signature appears at 8 to 18 (PSPTGFLHVGG). Positions 97, 99, 124, and 126 each coordinate Zn(2+). A 'KMSKS' region motif is present at residues 236–240 (KLSKR). Residue Lys239 participates in ATP binding.

This sequence belongs to the class-I aminoacyl-tRNA synthetase family. Glutamate--tRNA ligase type 1 subfamily. Monomer. It depends on Zn(2+) as a cofactor.

The protein localises to the cytoplasm. It catalyses the reaction tRNA(Glu) + L-glutamate + ATP = L-glutamyl-tRNA(Glu) + AMP + diphosphate. In terms of biological role, catalyzes the attachment of glutamate to tRNA(Glu) in a two-step reaction: glutamate is first activated by ATP to form Glu-AMP and then transferred to the acceptor end of tRNA(Glu). This is Glutamate--tRNA ligase from Francisella tularensis subsp. tularensis (strain SCHU S4 / Schu 4).